The sequence spans 60 residues: MSQLKVTLIKSAAHRLPKQRTIVKELGLGRVNSSVVLPNNEATRGAIFHIAHLIEVEEVK.

This sequence belongs to the universal ribosomal protein uL30 family. In terms of assembly, part of the 50S ribosomal subunit.

In Pediococcus pentosaceus (strain ATCC 25745 / CCUG 21536 / LMG 10740 / 183-1w), this protein is Large ribosomal subunit protein uL30.